Reading from the N-terminus, the 164-residue chain is Glycine cleavage system H protein, mitochondrial (164 aa).

Residues 1 to 34 (MALRLWASSAANALKISCSGATRAAPAYSISRYF) constitute a mitochondrion transit peptide. The region spanning 56 to 138 (VATIGITDHA…YEDGWMIKVK (83 aa)) is the Lipoyl-binding domain. An N6-lipoyllysine modification is found at Lys-97.

It belongs to the GcvH family. As to quaternary structure, the glycine cleavage system is composed of four proteins: P, T, L and H. Requires (R)-lipoate as cofactor.

It localises to the mitochondrion. Its function is as follows. The glycine cleavage system catalyzes the degradation of glycine. The H protein shuttles the methylamine group of glycine from the P protein to the T protein. In Oryza sativa subsp. indica (Rice), this protein is Glycine cleavage system H protein, mitochondrial (GDCSH).